A 521-amino-acid polypeptide reads, in one-letter code: 2,3-bisphosphoglycerate-independent phosphoglycerate mutase 2 (521 aa).

Positions 20 and 70 each coordinate Mn(2+). The active-site Phosphoserine intermediate is Ser70. Substrate is bound by residues His131, Arg161–Asp162, Arg193, Arg199, Arg270–Arg273, and Lys343. The Mn(2+) site is built by Asp410, His414, Asp451, His452, and His470.

Belongs to the BPG-independent phosphoglycerate mutase family. The cofactor is Mn(2+).

The catalysed reaction is (2R)-2-phosphoglycerate = (2R)-3-phosphoglycerate. Its pathway is carbohydrate degradation; glycolysis; pyruvate from D-glyceraldehyde 3-phosphate: step 3/5. Catalyzes the interconversion of 2-phosphoglycerate and 3-phosphoglycerate. This chain is 2,3-bisphosphoglycerate-independent phosphoglycerate mutase 2, found in Methanosarcina acetivorans (strain ATCC 35395 / DSM 2834 / JCM 12185 / C2A).